A 194-amino-acid polypeptide reads, in one-letter code: Cathelicidin-related peptide isoform 3 (194 aa).

An N-terminal signal peptide occupies residues 1–22 (MQGFFWKTWLVLAVCGTPASLA). The propeptide occupies 23 to 164 (HRPLSYGEAL…DQPKRVKRFK (142 aa)). Disulfide bonds link Cys79–Cys90 and Cys101–Cys118. The segment covering 125 to 145 (EEEEEEEEEEQKAEAENDEEV) has biased composition (acidic residues). The disordered stretch occupies residues 125–156 (EEEEEEEEEEQKAEAENDEEVEKEKGDEEKDQ). The segment covering 146–156 (EKEKGDEEKDQ) has biased composition (basic and acidic residues).

It belongs to the cathelicidin family. Expressed by the venom gland.

The protein resides in the secreted. It localises to the target cell membrane. Potent antimicrobial peptide against Gram-negative and Gram-positive bacteria. Adopts an amphipathic alpha helical conformation, that may allow to partition into the target membrane. Low hemolytic activities have been observed on mammalian cells. The polypeptide is Cathelicidin-related peptide isoform 3 (Crotalus durissus cascavella (Northeastern Brazilian rattlesnake)).